Here is a 1135-residue protein sequence, read N- to C-terminus: Envelopment polyprotein (1135 aa).

The first 35 residues, 1 to 35 (MRILKLLELVVKVSLFTIALSSVLLAFLIFRATDA), serve as a signal peptide directing secretion. At 36-314 (KVEIIRGDHP…KYSKSIYKQT (279 aa)) the chain is on the lumenal side. Residues 41 to 43 (RGD) carry the Cell attachment site motif. Cystine bridges form between C114-C145 and C122-C156. Residue N116 is glycosylated (N-linked (GlcNAc...) asparagine; by host). The tract at residues 177 to 195 (LDNKRHFSVGTKFFISESL) is non-covalent dimerization. The N-linked (GlcNAc...) asparagine; by host glycan is linked to N210. C224 and C285 are oxidised to a cystine. The helical transmembrane segment at 315-366 (ACINFSWIRLILIALLIYFPIRWLVNKTTKPLFLWYDLIGLITYPILLLINC) threads the bilayer. The Cytoplasmic portion of the chain corresponds to 367-484 (LWKYFPFKCS…VPGCPFLVTS (118 aa)). The interval 437-484 (LSFSLLKFVTEILIGLIILSQMPMSMAQTTQCLSGCFYVPGCPFLVTS) is signal for signal peptide peptidase. Topologically, residues 485 to 1067 (KFEKCPERDQ…YFGSFFDTIR (583 aa)) are lumenal. N588, N605, and N980 each carry an N-linked (GlcNAc...) asparagine; by host glycan. Residues 1068 to 1088 (VILLIAFIFLVIYFCSILTTI) form a helical membrane-spanning segment. Over 1089-1135 (CKGYVKNESYKSRSKIEDDDDSEIKAPMLMKDTMTRRRPPMDFSHLV) the chain is Cytoplasmic.

The protein belongs to the tospovirus envelope glycoprotein family. As to quaternary structure, homodimer; disulfide-linked. Heterodimer with Glycoprotein C. Interacts with nucleoprotein. In terms of assembly, heterodimer with Glycoprotein N. Interacts with nucleoprotein. In terms of processing, specific enzymatic cleavages in vivo yield mature proteins including Glycoprotein N and Glycoprotein C. Glycosylated with O-linked glycans. Glycosylation is essential for proper subcellular location. Post-translationally, cleaved at acidic pH.

The protein resides in the virion membrane. Its subcellular location is the host Golgi apparatus membrane. It localises to the host endoplasmic reticulum membrane. Functionally, forms the spikes present at the surface of the virion together with Glycoprotein C. They are able to attach the virion to a cell receptor and to promote fusion of membranes after endocytosis of the virion. Plays a role in virus binding and/or entry into the vector midgut. Forms the spikes present at the surface of the virion together with Glycoprotein N. They are able to attach the virion to a cell receptor and to promote fusion of membranes after endocytosis of the virion. Probable class II fusion protein. The chain is Envelopment polyprotein (GP) from Tomato spotted wilt virus (strain Regular2A) (TSWV).